Consider the following 120-residue polypeptide: uncharacterized protein (120 aa).

A helical membrane pass occupies residues 93–109 (LCVGISTTMIIQVLFLL).

It is found in the membrane. This is an uncharacterized protein from Saccharomyces cerevisiae (strain ATCC 204508 / S288c) (Baker's yeast).